Here is a 134-residue protein sequence, read N- to C-terminus: Thionin-2.2 (134 aa).

An N-terminal signal peptide occupies residues 1–24 (MEGKTVISSLLIMSLVLAQIQVEA). Intrachain disulfides connect Cys-27-Cys-64, Cys-28-Cys-56, and Cys-40-Cys-50. The propeptide at 71 to 134 (DILENSGDAV…GGSTAAVKSA (64 aa)) is acidic domain.

The protein belongs to the plant thionin (TC 1.C.44) family. As to expression, low basal expression in seedlings. Also detected in rosette leaves.

The protein localises to the secreted. Functionally, thionins are small plant proteins which are toxic to animal cells. They seem to exert their toxic effect at the level of the cell membrane. Their precise function is not known. The chain is Thionin-2.2 (THI2.2) from Arabidopsis thaliana (Mouse-ear cress).